We begin with the raw amino-acid sequence, 227 residues long: Testis expressed protein 56 (227 aa).

As to expression, expressed predominantly in the testis.

This Mus musculus (Mouse) protein is Testis expressed protein 56.